The chain runs to 81 residues: Kappa-theraphotoxin-Gr2c (81 aa).

Residues 1 to 19 (MKAFFVILGLALLCAYSFA) form the signal peptide. Residues 20-50 (LEEQDQLSLRNDLLTVMFAENSELTPETEER) constitute a propeptide that is removed on maturation. 3 disulfides stabilise this stretch: Cys-52–Cys-66, Cys-59–Cys-71, and Cys-65–Cys-75.

It belongs to the neurotoxin 30 (phrixotoxin) family. Expressed by the venom gland.

The protein localises to the secreted. Inhibits sodium channels Nav1.1/SCN1A (IC(50)=5.7 uM), Nav1.2/SCN2A (IC(50)=12 uM), Nav1.4/SCN4A (IC(50)=4 uM), Nav1.6/SCN8A (IC(50)=6.6 uM), Nav1.7/SCN9A (IC(50)=13.6-1030 nM), potassium channels Kv11.1/KCNH2 (IC(50)=4.7 uM), as well as high-voltage-gated calcium channels Cav1.2/CACNA1C (IC(50)= nM). Also blocks mechanosensitive ion channels (also named stretch-activated channels or SACs) and the hypotonic cell swelling induced calcium increase associated with the activation of such channels. It can thus be useful in treating cardiac ventricular disturbances. Also induces analgesia in mammals. The chain is Kappa-theraphotoxin-Gr2c from Grammostola rosea (Chilean rose tarantula).